The primary structure comprises 571 residues: Proline--tRNA ligase (571 aa).

This sequence belongs to the class-II aminoacyl-tRNA synthetase family. ProS type 1 subfamily. As to quaternary structure, homodimer.

The protein resides in the cytoplasm. It carries out the reaction tRNA(Pro) + L-proline + ATP = L-prolyl-tRNA(Pro) + AMP + diphosphate. Catalyzes the attachment of proline to tRNA(Pro) in a two-step reaction: proline is first activated by ATP to form Pro-AMP and then transferred to the acceptor end of tRNA(Pro). As ProRS can inadvertently accommodate and process non-cognate amino acids such as alanine and cysteine, to avoid such errors it has two additional distinct editing activities against alanine. One activity is designated as 'pretransfer' editing and involves the tRNA(Pro)-independent hydrolysis of activated Ala-AMP. The other activity is designated 'posttransfer' editing and involves deacylation of mischarged Ala-tRNA(Pro). The misacylated Cys-tRNA(Pro) is not edited by ProRS. The protein is Proline--tRNA ligase of Syntrophotalea carbinolica (strain DSM 2380 / NBRC 103641 / GraBd1) (Pelobacter carbinolicus).